We begin with the raw amino-acid sequence, 513 residues long: tRNA A64-2'-O-ribosylphosphate transferase (513 aa).

TRNA backbone modifying enzyme that mediates initiator/ elongator tRNA discrimination. This enzyme modifies exclusively the initiator tRNA in position 64 using 5'-phosphoribosyl-1'-pyrophosphate as the modification donor. Recognize the stem-loop IV region that is unique in eukaryotic cytoplasmic initiator tRNAs. This Saccharomyces cerevisiae (strain ATCC 204508 / S288c) (Baker's yeast) protein is tRNA A64-2'-O-ribosylphosphate transferase (RIT1).